The sequence spans 686 residues: Elongation factor G 2 (686 aa).

The tr-type G domain maps to 7-280 (TTVRNLGILA…AVVAYLPSPL (274 aa)). GTP contacts are provided by residues 16-23 (AHVDAGKT), 80-84 (DTPGH), and 134-137 (NKMD).

The protein belongs to the TRAFAC class translation factor GTPase superfamily. Classic translation factor GTPase family. EF-G/EF-2 subfamily.

The protein resides in the cytoplasm. Catalyzes the GTP-dependent ribosomal translocation step during translation elongation. During this step, the ribosome changes from the pre-translocational (PRE) to the post-translocational (POST) state as the newly formed A-site-bound peptidyl-tRNA and P-site-bound deacylated tRNA move to the P and E sites, respectively. Catalyzes the coordinated movement of the two tRNA molecules, the mRNA and conformational changes in the ribosome. The protein is Elongation factor G 2 (fusB) of Streptomyces coelicolor (strain ATCC BAA-471 / A3(2) / M145).